The chain runs to 234 residues: Glutathione S-transferase 1 (234 aa).

The 88-residue stretch at 3–90 (LPIIKVHWLD…YVLQHFDHSH (88 aa)) folds into the GST N-terminal domain. The 139-residue stretch at 96–234 (DADIADQINY…EKARALGSNF (139 aa)) folds into the GST C-terminal domain.

It belongs to the GST superfamily. Homodimer.

It is found in the endoplasmic reticulum membrane. It catalyses the reaction RX + glutathione = an S-substituted glutathione + a halide anion + H(+). In Saccharomyces cerevisiae (strain ATCC 204508 / S288c) (Baker's yeast), this protein is Glutathione S-transferase 1 (GTT1).